Consider the following 194-residue polypeptide: Orotate phosphoribosyltransferase (194 aa).

A 5-phospho-alpha-D-ribose 1-diphosphate-binding site is contributed by E116–S124. 2 residues coordinate orotate: T120 and R148.

The protein belongs to the purine/pyrimidine phosphoribosyltransferase family. PyrE subfamily. In terms of assembly, homodimer. The cofactor is Mg(2+).

It catalyses the reaction orotidine 5'-phosphate + diphosphate = orotate + 5-phospho-alpha-D-ribose 1-diphosphate. It participates in pyrimidine metabolism; UMP biosynthesis via de novo pathway; UMP from orotate: step 1/2. Its function is as follows. Catalyzes the transfer of a ribosyl phosphate group from 5-phosphoribose 1-diphosphate to orotate, leading to the formation of orotidine monophosphate (OMP). The chain is Orotate phosphoribosyltransferase from Caulobacter vibrioides (strain ATCC 19089 / CIP 103742 / CB 15) (Caulobacter crescentus).